A 347-amino-acid polypeptide reads, in one-letter code: NADH-ubiquinone oxidoreductase chain 2 (347 aa).

The next 11 membrane-spanning stretches (helical) occupy residues 1-21 (MNPL…SIIL), 25-45 (HWFM…PVLM), 59-79 (YFLT…INLM), 96-116 (LLIT…FWVP), 122-142 (VSLQ…LAVM), 145-165 (IFAS…IMIG), 178-198 (IMAY…IYNP), 200-220 (LMLL…MMFM), 242-262 (VLMM…GFMP), 274-294 (NSVI…FFYM), and 325-345 (LLAP…MFIL).

Belongs to the complex I subunit 2 family. In terms of assembly, core subunit of respiratory chain NADH dehydrogenase (Complex I) which is composed of 45 different subunits. Interacts with TMEM242.

Its subcellular location is the mitochondrion inner membrane. It catalyses the reaction a ubiquinone + NADH + 5 H(+)(in) = a ubiquinol + NAD(+) + 4 H(+)(out). In terms of biological role, core subunit of the mitochondrial membrane respiratory chain NADH dehydrogenase (Complex I) which catalyzes electron transfer from NADH through the respiratory chain, using ubiquinone as an electron acceptor. Essential for the catalytic activity and assembly of complex I. This Myosorex kihaulei (Kihaule's mouse shrew) protein is NADH-ubiquinone oxidoreductase chain 2.